The primary structure comprises 622 residues: Palmitoyltransferase pfa3 (622 aa).

Residues 1–38 (MDATPYTTSSTSTALDSPSSLSATMARRWARKLERYCC) lie on the Cytoplasmic side of the membrane. The chain crosses the membrane as a helical span at residues 39-59 (TCVTYFPLAFVYSMTSWAAYV). Over 60-76 (DVSLSTTPSRVTWLGHS) the chain is Vacuolar. The helical transmembrane segment at 77-97 (YGFIAVVLYLLANWCYTYAVF) threads the bilayer. Topologically, residues 98–175 (TSPGSTTNEY…ATCVGLRNHK (78 aa)) are cytoplasmic. Residues 132-182 (RFCKKCQARKPDRAHHCSTCRRCVLKMDHHCPWLATCVGLRNHKAFLLFLI) form the DHHC domain. Residues 176-196 (AFLLFLIYTSVFCWVSFAGSA) form a helical membrane-spanning segment. The Vacuolar portion of the chain corresponds to 197–217 (SWVWEEIMSNTTYVETLMPVN). Residues 218–238 (YIMLSVISGIIGIVLSAFCGW) traverse the membrane as a helical segment. Over 239-622 (HIYLASRGQT…EGRSNDDGVD (384 aa)) the chain is Cytoplasmic. Disordered stretches follow at residues 298–334 (PGVT…ELQA), 419–507 (REEQ…YADD), and 533–622 (DDVL…DGVD). Positions 302 to 311 (RPEEGEEMRR) are enriched in basic and acidic residues. A compositionally biased stretch (polar residues) spans 313–330 (TTPSGSSQRNDLASQHNP). Positions 419–428 (REEQRQRERQ) are enriched in basic and acidic residues. Polar residues predominate over residues 443–455 (YTPTWTPPNQQHP). Residues 466-488 (PSSQPQTQRNSNSSSPSFTPSRR) are compositionally biased toward low complexity. Residues 533-547 (DDVLNDDDDDDEDYF) show a composition bias toward acidic residues. Basic and acidic residues predominate over residues 610-622 (NGEEGRSNDDGVD).

Belongs to the DHHC palmitoyltransferase family. PFA3 subfamily. Autopalmitoylated.

It localises to the vacuole membrane. It catalyses the reaction L-cysteinyl-[protein] + hexadecanoyl-CoA = S-hexadecanoyl-L-cysteinyl-[protein] + CoA. Its function is as follows. Palmitoyltransferase specific for vac8. Palmitoylates vac8 at one or more of its N-terminal cysteine residues, which is required for its proper membrane localization. The protein is Palmitoyltransferase pfa3 (ptr-3) of Neurospora crassa (strain ATCC 24698 / 74-OR23-1A / CBS 708.71 / DSM 1257 / FGSC 987).